A 151-amino-acid chain; its full sequence is Putative pre-16S rRNA nuclease (151 aa).

This sequence belongs to the YqgF nuclease family.

The protein resides in the cytoplasm. Functionally, could be a nuclease involved in processing of the 5'-end of pre-16S rRNA. The protein is Putative pre-16S rRNA nuclease of Prochlorococcus marinus (strain MIT 9515).